Reading from the N-terminus, the 226-residue chain is Orotidine 5'-phosphate decarboxylase (226 aa).

Residues Asp-9, Lys-31, 58–67 (DLKLYDIPNT), Thr-115, Arg-176, Gln-184, Gly-204, and Arg-205 each bind substrate. Lys-60 acts as the Proton donor in catalysis.

This sequence belongs to the OMP decarboxylase family. Type 1 subfamily. In terms of assembly, homodimer.

The enzyme catalyses orotidine 5'-phosphate + H(+) = UMP + CO2. It participates in pyrimidine metabolism; UMP biosynthesis via de novo pathway; UMP from orotate: step 2/2. Its function is as follows. Catalyzes the decarboxylation of orotidine 5'-monophosphate (OMP) to uridine 5'-monophosphate (UMP). This Wolbachia pipientis subsp. Culex pipiens (strain wPip) protein is Orotidine 5'-phosphate decarboxylase.